The chain runs to 619 residues: ESX-2 secretion system protein EccA2 (619 aa).

Position 373–380 (373–380 (GPPGTGKT)) interacts with ATP.

This sequence belongs to the CbxX/CfxQ family. Part of the ESX-2 / type VII secretion system (T7SS), which is composed of cytosolic and membrane components.

Its subcellular location is the cytoplasm. Its function is as follows. Part of an ESX-2 / type VII specialized secretion system (T7SS), which exports several proteins. May have ATPase activity and might provide energy for the export of ESX-2 substrates. The protein is ESX-2 secretion system protein EccA2 of Mycobacterium bovis (strain ATCC BAA-935 / AF2122/97).